Reading from the N-terminus, the 299-residue chain is Oxygen-dependent coproporphyrinogen-III oxidase (299 aa).

S92 is a binding site for substrate. Positions 96 and 106 each coordinate a divalent metal cation. H106 serves as the catalytic Proton donor. Substrate is bound at residue 108 to 110; sequence NVR. Residues H145 and H175 each contribute to the a divalent metal cation site. Residues 240-275 are important for dimerization; it reads YVEFNLVWDRGTLFGLQTGGRTESILMSMPPLVRWE. A substrate-binding site is contributed by 258 to 260; it reads GGR.

It belongs to the aerobic coproporphyrinogen-III oxidase family. Homodimer. The cofactor is a divalent metal cation.

It localises to the cytoplasm. The catalysed reaction is coproporphyrinogen III + O2 + 2 H(+) = protoporphyrinogen IX + 2 CO2 + 2 H2O. It functions in the pathway porphyrin-containing compound metabolism; protoporphyrin-IX biosynthesis; protoporphyrinogen-IX from coproporphyrinogen-III (O2 route): step 1/1. Functionally, involved in the heme biosynthesis. Catalyzes the aerobic oxidative decarboxylation of propionate groups of rings A and B of coproporphyrinogen-III to yield the vinyl groups in protoporphyrinogen-IX. This chain is Oxygen-dependent coproporphyrinogen-III oxidase, found in Shigella dysenteriae serotype 1 (strain Sd197).